The primary structure comprises 128 residues: Large ribosomal subunit protein uL18 (128 aa).

The protein belongs to the universal ribosomal protein uL18 family. In terms of assembly, part of the 50S ribosomal subunit; part of the 5S rRNA/L5/L18/L25 subcomplex. Contacts the 5S and 23S rRNAs.

Functionally, this is one of the proteins that bind and probably mediate the attachment of the 5S RNA into the large ribosomal subunit, where it forms part of the central protuberance. In Acidothermus cellulolyticus (strain ATCC 43068 / DSM 8971 / 11B), this protein is Large ribosomal subunit protein uL18.